The chain runs to 218 residues: 25 kDa calcium-binding protein (218 aa).

EF-hand domains are found at residues glycine 24 to serine 59, proline 66 to glycine 101, alanine 128 to glutamate 163, and proline 171 to lysine 206. 17 residues coordinate Ca(2+): aspartate 37, arginine 43, aspartate 48, aspartate 79, asparagine 81, aspartate 83, aspartate 90, aspartate 141, aspartate 143, serine 145, glutamine 147, glutamate 152, aspartate 184, asparagine 186, aspartate 188, serine 190, and glutamate 195.

In terms of biological role, expected to play a crucial role in calcium-dependent regulation of ciliary movement. The polypeptide is 25 kDa calcium-binding protein (Tetrahymena thermophila).